The chain runs to 1255 residues: TBC1 domain family member 1 (1255 aa).

Ser146 carries the post-translational modification Phosphoserine. Residues 208–228 (RTDWEAPTGQPSAPGPRPMRK) are disordered. Residue Ser229 is modified to Phosphoserine; by PKB/AKT1. Phosphoserine; by AMPK is present on Ser231. A PID domain is found at 238 to 398 (LAFRKEFQDA…LHKLCERIEG (161 aa)). Residue Ser489 is modified to Phosphoserine; by PKB/AKT1. Ser497 is modified (phosphoserine). Residue Thr499 is modified to Phosphothreonine; by PKB/AKT1. Phosphoserine is present on residues Ser501, Ser519, Ser521, Ser559, Ser560, Ser564, Ser565, and Ser579. Disordered regions lie at residues 509 to 544 (GNKA…MGDK) and 559 to 581 (SSDD…LSPQ). Low complexity predominate over residues 519–539 (SASVDLDSSTSSTLSNTSKEL). Thr590 carries the post-translational modification Phosphothreonine. 2 disordered regions span residues 595-614 (PVEC…VSQR) and 621-681 (SVST…GNAV). Phosphoserine is present on Ser608. Ser621 is modified (phosphoserine; by PKB/AKT1). 2 positions are modified to phosphoserine: Ser660 and Ser661. Residues 670–679 (HNSSGEQSGN) are compositionally biased toward polar residues. At Ser697 the chain carries Phosphoserine; by PKB/AKT1. 2 positions are modified to phosphoserine: Ser698 and Ser699. A Phosphoserine; by AMPK modification is found at Ser700. The interval 764–786 (DSPSRYEDYSELGELPPRSPLEP) is disordered. A phosphoserine mark is found at Ser782 and Ser1028. Residues 887–1081 (GVPRHHRGEI…RVFDMIFLQG (195 aa)) enclose the Rab-GAP TBC domain. Residue Tyr1039 is modified to Phosphotyrosine. Thr1218 carries the post-translational modification Phosphothreonine. Positions 1233–1255 (LRRQSARPSTPEPDCTQLEPTGD) are disordered.

As to quaternary structure, interacts with APPL2 (via BAR domain); interaction is dependent of TBC1D1 phosphorylation at Ser-229; interaction diminishes the phosphorylation of TBC1D1 at Thr-590, resulting in inhibition of SLC2A4/GLUT4 translocation and glucose uptake. Post-translationally, insulin-stimulated phosphorylation by AKT family kinases stimulates SLC2A4/GLUT4 translocation. As to expression, expressed in highest levels in hematopoietic cells, testis and kidney.

Its subcellular location is the nucleus. Its function is as follows. May act as a GTPase-activating protein for Rab family protein(s). May play a role in the cell cycle and differentiation of various tissues. Involved in the trafficking and translocation of GLUT4-containing vesicles and insulin-stimulated glucose uptake into cells. This Mus musculus (Mouse) protein is TBC1 domain family member 1 (Tbc1d1).